The chain runs to 139 residues: Mitochondrial intermembrane space import and assembly protein 40 (139 aa).

3 disulfides stabilise this stretch: C53–C55, C64–C97, and C74–C87. The CHCH domain occupies 61–105 (SGPCGEQFKSAFSCFHYSQEEIKGSDCLDQFRAMQECMQKYPDIY). Short sequence motifs (cx9C motif) lie at residues 64–74 (CGEQFKSAFSC) and 87–97 (CLDQFRAMQEC). The interval 102–139 (PDIYPQEDDEDEAEKEKQNKEAEAFSTETSDTKEESSS) is disordered. The segment covering 115–124 (EKEKQNKEAE) has biased composition (basic and acidic residues).

In terms of assembly, monomer. Can form homooligomers.

Its subcellular location is the mitochondrion intermembrane space. Its function is as follows. Central component of a redox-sensitive mitochondrial intermembrane space import machinery which is required for the biogenesis of respiratory chain complexes. Functions as chaperone and catalyzes the formation of disulfide bonds in substrate proteins, such as COX17 or MICU1. Required for the import and folding of small cysteine-containing proteins (small Tim) in the mitochondrial intermembrane space (IMS). Precursor proteins to be imported into the IMS are translocated in their reduced form into the mitochondria. This is Mitochondrial intermembrane space import and assembly protein 40 (chchd4) from Xenopus tropicalis (Western clawed frog).